We begin with the raw amino-acid sequence, 800 residues long: Phenylalanine--tRNA ligase beta subunit (800 aa).

The 116-residue stretch at 39–154 (TKDIKKLVVG…EAVKPGTDAL (116 aa)) folds into the tRNA-binding domain. The B5 domain maps to 408–483 (SFVTPIKITA…RIYGYDDIPS (76 aa)). Residues Asp461, Asp467, Glu470, and Glu471 each coordinate Mg(2+). One can recognise an FDX-ACB domain in the interval 708-800 (PRFPGVTRDI…ALKKHGAIIR (93 aa)).

Belongs to the phenylalanyl-tRNA synthetase beta subunit family. Type 1 subfamily. In terms of assembly, tetramer of two alpha and two beta subunits. Requires Mg(2+) as cofactor.

The protein localises to the cytoplasm. The catalysed reaction is tRNA(Phe) + L-phenylalanine + ATP = L-phenylalanyl-tRNA(Phe) + AMP + diphosphate + H(+). This chain is Phenylalanine--tRNA ligase beta subunit, found in Staphylococcus epidermidis (strain ATCC 35984 / DSM 28319 / BCRC 17069 / CCUG 31568 / BM 3577 / RP62A).